We begin with the raw amino-acid sequence, 98 residues long: MSTLGILLPIALLLPLANPAENGDGQAMPRTRNLRSLSFGRTLRRLEKRGCDPTDGCQTTVCETDTGPCCCKPNFTCQISNSGTKSCSCSGQPSDCPV.

The N-terminal stretch at 1 to 19 (MSTLGILLPIALLLPLANP) is a signal peptide. Positions 20-49 (AENGDGQAMPRTRNLRSLSFGRTLRRLEKR) are excised as a propeptide. Residue Pro-53 is modified to 4-hydroxyproline. Glu-63 bears the 4-carboxyglutamate mark. 4-hydroxyproline occurs at positions 68, 93, and 97.

Contains 5 disulfide bonds. As to expression, expressed by the venom duct.

Its subcellular location is the secreted. Its function is as follows. Injection of the synthetic peptide causes a hyperexcitable phenotype in mice greater than three weeks of age at lower doses, and lethargy at higher doses. This Conus distans (Distant cone) protein is Conotoxin Di19A.